Consider the following 410-residue polypeptide: MADQKRKLADPDAEAPTGKMARAGPGELDLVYPFWYQVAAPTEITPPFLDPNGPLYSTDGLLNVRLTAPLVIIRQSNGNAIGVKTDGSITVNADGALQIGISTAGPLTTTANGIDLNIDPKTLVVDGSSGKNVLGVLLKGQGALQSSAQGIGVAVDESLQIVDNTLEVKVDAAGPLAVTAAGVGLQYDNTQFKVTNGTLQLYQAPTSSVAAFTSGTIGLSSPTGNFVSSSNNPFNGSYFLQQINTMGMLTTSLYVKVDTTTMGTRPTGAVNENARYFTVWVSSFLTQCNPSNIGQGTLEPSNISMTSFEPARNPISPPVFNMNQNIPYYASRFGVLESYRPIFTGSLNTGSIDVRMQVTPVLATNNTTYNLIAFTFQCASAGLFNPTVNGTVAIGPVVHTCPAARAPVTV.

Basic and acidic residues predominate over residues Met-1–Asp-10. The tract at residues Met-1–Arg-22 is disordered.

Belongs to the adenoviridae fiber family. In terms of assembly, homotrimer. Interacts (via N-terminal tail region) with pentons.

Its subcellular location is the virion. It localises to the host nucleus. Forms spikes that protrude from each vertex of the icosahedral capsid. Interacts with host receptor to provide virion initial attachment to target cell. Fiber proteins are shed during virus entry, when virus is still at the cell surface. The protein is Fiber protein 2 of Fowl adenovirus A serotype 1 (strain CELO / Phelps) (FAdV-1).